The primary structure comprises 102 residues: RNA-binding protein Hfq (102 aa).

One can recognise a Sm domain in the interval 9-68; the sequence is DPFLNALRRERVPVSIYLVNGIKLQGQIESFDQFVILLKNTVSQMVYKHAISTVVPSRPV. Residues 63–102 are disordered; sequence VPSRPVSHHSNNAGGGTSSNYHHGSSAQNTSAQQDSEETE. Polar residues predominate over residues 70–96; the sequence is HHSNNAGGGTSSNYHHGSSAQNTSAQQ.

The protein belongs to the Hfq family. As to quaternary structure, homohexamer.

RNA chaperone that binds small regulatory RNA (sRNAs) and mRNAs to facilitate mRNA translational regulation in response to envelope stress, environmental stress and changes in metabolite concentrations. Also binds with high specificity to tRNAs. The chain is RNA-binding protein Hfq from Escherichia fergusonii (strain ATCC 35469 / DSM 13698 / CCUG 18766 / IAM 14443 / JCM 21226 / LMG 7866 / NBRC 102419 / NCTC 12128 / CDC 0568-73).